Here is a 730-residue protein sequence, read N- to C-terminus: Actin filament-associated protein 1 (730 aa).

The residue at position 1 (Met1) is an N-acetylmethionine. The segment at 47–91 (KDHAQKQETANSLPAPPQMPLPEIPQPWLPPDSGPPPLPTSSLPE) is disordered. Over residues 60–85 (PAPPQMPLPEIPQPWLPPDSGPPPLP) the composition is skewed to pro residues. The short motif at 71 to 74 (PQPW) is the SH3-binding element. The SH2-binding 1 signature appears at 94–97 (YEEA). The tract at residues 119-140 (SSSYESYDEEEEDGKGKKTRHQ) is disordered. In terms of domain architecture, PH 1 spans 153–249 (DAKICAFLLR…WLKVIKEAYS (97 aa)). Positions 252-292 (SGPVDSECPPPPSSPVHKAELEKKLSSERPSSDGEGVVENG) are disordered. The span at 268–283 (HKAELEKKLSSERPSS) shows a compositional bias: basic and acidic residues. Residues Ser282 and Ser283 each carry the phosphoserine modification. Residues 347-441 (DVPTCGYLNV…WIGILLAETG (95 aa)) form the PH 2 domain. The SH2-binding 2 signature appears at 451–456 (YDYIDV). A disordered region spans residues 512 to 537 (KGKKPPVASNGVTGKGKTLSSQPKKA). At Ser548 the chain carries Phosphoserine. The stretch at 557 to 648 (KNRVEADAKR…VKESLKKALA (92 aa)) forms a coiled coil. Residues 594-637 (DLRAAIEVNAGRKPQAILEEKLKQLEEECRQKEAERVSLELELT) form an interaction with F-actin region. Ser664, Ser665, and Ser668 each carry phosphoserine. Phosphothreonine is present on Thr675. Residues Ser679 and Ser687 each carry the phosphoserine modification.

In terms of assembly, monomer and homomultimer. Interacts via its C-terminus with F-actin; probably involving AFAP1 multimers. Interacts with activated SRC SH3-SH2 domains. Interacts via its PH 1 domain with PRKCA, PRKCB and PRKCI. Phosphorylated on tyrosine residues by SRC. As to expression, low expression in normal breast epithelial cell line MCF-10A and in tumorigenic breast cancer cell lines MCF-7, T-47D and ZR-75-1. Highly expressed in the invasive breast cancer cell lines MDA-MB-231 and MDA-MB-435. Overexpressed in prostate carcinoma.

It localises to the cytoplasm. The protein resides in the cytoskeleton. Its subcellular location is the stress fiber. Functionally, can cross-link actin filaments into both network and bundle structures. May modulate changes in actin filament integrity and induce lamellipodia formation. May function as an adapter molecule that links other proteins, such as SRC and PKC to the actin cytoskeleton. Seems to play a role in the development and progression of prostate adenocarcinoma by regulating cell-matrix adhesions and migration in the cancer cells. The sequence is that of Actin filament-associated protein 1 (AFAP1) from Homo sapiens (Human).